We begin with the raw amino-acid sequence, 367 residues long: Aminomethyltransferase (367 aa).

This sequence belongs to the GcvT family. The glycine cleavage system is composed of four proteins: P, T, L and H.

It carries out the reaction N(6)-[(R)-S(8)-aminomethyldihydrolipoyl]-L-lysyl-[protein] + (6S)-5,6,7,8-tetrahydrofolate = N(6)-[(R)-dihydrolipoyl]-L-lysyl-[protein] + (6R)-5,10-methylene-5,6,7,8-tetrahydrofolate + NH4(+). Functionally, the glycine cleavage system catalyzes the degradation of glycine. This Mycobacterium bovis (strain ATCC BAA-935 / AF2122/97) protein is Aminomethyltransferase.